A 264-amino-acid polypeptide reads, in one-letter code: MSSTESPGRTSDKSPRQQVDRLLLGLRWQRLEEPLGFIKVLQWLFAIFAFGSCGSYSGETGALVLCNNEAKDVSSIIVLFGYPFRLYQVQYEMPLCDQDSTSKTMNLMGDFSAPAEFFVTLGIFSFFYTMAALVIYLRFHKLYTENKRFPLVDFCVTVSFTFFWLVAAAAWGKGLTDVKGATRPSSLTAAMSVCHGEEAVCSAGATPSMGLANLSVLFGFINFFLWAGNCWFVFKETPWHGQGQDQGQGPSQESAAEQGAVEKQ.

Residues Met1–Glu33 are Cytoplasmic-facing. The region spanning Arg30–Pro238 is the MARVEL domain. The helical transmembrane segment at Pro34–Gly54 threads the bilayer. The Vesicular portion of the chain corresponds to Ser55–Glu116. Residues Phe117 to Leu137 form a helical membrane-spanning segment. Over Arg138 to Pro150 the chain is Cytoplasmic. The chain crosses the membrane as a helical span at residues Leu151 to Trp171. At Gly172–Asn213 the chain is on the vesicular side. The N-linked (GlcNAc...) asparagine glycan is linked to Asn213. Residues Leu214–Phe234 traverse the membrane as a helical segment. Topologically, residues Lys235–Gln264 are cytoplasmic. The interval Gln242–Gln264 is disordered.

Belongs to the synaptophysin/synaptobrevin family. As to expression, expressed abundantly in skeletal muscle and at lower levels in the kidney.

The protein localises to the membrane. Its function is as follows. Involved in communication between the T-tubular and junctional sarcoplasmic reticulum (SR) membranes. This Mus musculus (Mouse) protein is Synaptophysin-like protein 2 (Sypl2).